The following is a 195-amino-acid chain: Thymidylate kinase (195 aa).

7-14 is a binding site for ATP; it reads GVDTCGKS.

Belongs to the thymidylate kinase family.

It catalyses the reaction dTMP + ATP = dTDP + ADP. Functionally, phosphorylation of dTMP to form dTDP in both de novo and salvage pathways of dTTP synthesis. The chain is Thymidylate kinase from Helicobacter hepaticus (strain ATCC 51449 / 3B1).